Reading from the N-terminus, the 102-residue chain is NADH-quinone oxidoreductase subunit K (102 aa).

Helical transmembrane passes span 5 to 25 (IAHYLTVSAILFTLGVFGIFL), 31 to 51 (IVILMSIELILLSVNLNFVAF), and 66 to 86 (FVLTVAAAEAAIGLAILVVFF).

Belongs to the complex I subunit 4L family. In terms of assembly, NDH-1 is composed of 14 different subunits. Subunits NuoA, H, J, K, L, M, N constitute the membrane sector of the complex.

It localises to the cell inner membrane. It carries out the reaction a quinone + NADH + 5 H(+)(in) = a quinol + NAD(+) + 4 H(+)(out). Functionally, NDH-1 shuttles electrons from NADH, via FMN and iron-sulfur (Fe-S) centers, to quinones in the respiratory chain. The immediate electron acceptor for the enzyme in this species is believed to be ubiquinone. Couples the redox reaction to proton translocation (for every two electrons transferred, four hydrogen ions are translocated across the cytoplasmic membrane), and thus conserves the redox energy in a proton gradient. The chain is NADH-quinone oxidoreductase subunit K from Brucella abortus (strain S19).